Here is a 219-residue protein sequence, read N- to C-terminus: Small ribosomal subunit protein uS3 (219 aa).

The KH type-2 domain maps to 38–106 (IRKFIEKRLV…RVHINIVEIK (69 aa)).

The protein belongs to the universal ribosomal protein uS3 family. In terms of assembly, part of the 30S ribosomal subunit. Forms a tight complex with proteins S10 and S14.

Functionally, binds the lower part of the 30S subunit head. Binds mRNA in the 70S ribosome, positioning it for translation. The polypeptide is Small ribosomal subunit protein uS3 (Levilactobacillus brevis (strain ATCC 367 / BCRC 12310 / CIP 105137 / JCM 1170 / LMG 11437 / NCIMB 947 / NCTC 947) (Lactobacillus brevis)).